The chain runs to 273 residues: Undecaprenyl-diphosphatase (273 aa).

The next 7 membrane-spanning stretches (helical) occupy residues 6 to 26 (SLLI…LPVS), 45 to 65 (AKTF…VMFW), 90 to 110 (LTLI…LVFH), 116 to 136 (LFNP…LIAA), 190 to 210 (YAAS…ATVL), 222 to 242 (ADIP…LIAI), and 252 to 272 (ISFI…YVVF).

It belongs to the UppP family.

It localises to the cell inner membrane. It carries out the reaction di-trans,octa-cis-undecaprenyl diphosphate + H2O = di-trans,octa-cis-undecaprenyl phosphate + phosphate + H(+). In terms of biological role, catalyzes the dephosphorylation of undecaprenyl diphosphate (UPP). Confers resistance to bacitracin. This Salmonella paratyphi C (strain RKS4594) protein is Undecaprenyl-diphosphatase.